A 310-amino-acid polypeptide reads, in one-letter code: Quinolinate synthase 2 (310 aa).

Iminosuccinate is bound by residues H30 and S47. C92 lines the [4Fe-4S] cluster pocket. Residues Y118–N120 and S135 contribute to the iminosuccinate site. C177 contacts [4Fe-4S] cluster. Residues H203–E205 and T220 contribute to the iminosuccinate site. C265 lines the [4Fe-4S] cluster pocket.

The protein belongs to the quinolinate synthase family. Type 2 subfamily. Requires [4Fe-4S] cluster as cofactor.

Its subcellular location is the cytoplasm. It catalyses the reaction iminosuccinate + dihydroxyacetone phosphate = quinolinate + phosphate + 2 H2O + H(+). It functions in the pathway cofactor biosynthesis; NAD(+) biosynthesis; quinolinate from iminoaspartate: step 1/1. In terms of biological role, catalyzes the condensation of iminoaspartate with dihydroxyacetone phosphate to form quinolinate. This chain is Quinolinate synthase 2, found in Methanosarcina acetivorans (strain ATCC 35395 / DSM 2834 / JCM 12185 / C2A).